A 221-amino-acid chain; its full sequence is MAEITQIQVESHVFPPEVKPPGSDKTFFLGGAGVRGLEIQGKFIKFTAIAVYIEDDAVSSLAVKWKGKTADELTDSVDFFKDIVTGPFEKFTQVTMILPLTGQQYSEKVVENCVAHWKSVGTYTDAESEATQKFLQVFKNVSNPPGASILFTQSPLGSLTISFSKDGSLPENGKEVIVNKQLSEAVLQSIIGKHGVSPEAKKSLSARLSDLINQHENPKKE.

Positions 47, 112, and 189 each coordinate substrate.

The protein belongs to the chalcone isomerase family.

The enzyme catalyses a chalcone = a flavanone.. The protein operates within secondary metabolite biosynthesis; flavonoid biosynthesis. Catalyzes the intramolecular cyclization of bicyclic chalcones into tricyclic (S)-flavanones. Responsible for the isomerization of 4,2',4',6'-tetrahydroxychalcone (also termed chalcone) into naringenin. The protein is Chalcone--flavanone isomerase (CHI) of Dianthus caryophyllus (Carnation).